The following is a 377-amino-acid chain: Nitric oxide reductase FlRd-NAD(+) reductase (377 aa).

This sequence belongs to the FAD-dependent oxidoreductase family. The cofactor is FAD.

The protein localises to the cytoplasm. It carries out the reaction 2 reduced [nitric oxide reductase rubredoxin domain] + NAD(+) + H(+) = 2 oxidized [nitric oxide reductase rubredoxin domain] + NADH. It participates in nitrogen metabolism; nitric oxide reduction. Functionally, one of at least two accessory proteins for anaerobic nitric oxide (NO) reductase. Reduces the rubredoxin moiety of NO reductase. This is Nitric oxide reductase FlRd-NAD(+) reductase from Klebsiella pneumoniae (strain 342).